The following is a 168-amino-acid chain: MPRSRINGNFIDKTFSIVANILLRIIPTTSGEKEAFTYYRDGMSAQSEGNYAEALQNYYEAMRLEIDPYDRSYILYNIGLIHTSNGEHTKALEYYFRALERNPFLPQACNNMAVICHYRGEQAIQQGDSELAETWFDQAAEYWKQAIALTPGNYIEAHNWLKITGRFE.

TPR repeat units follow at residues 35-68 (AFTY…EIDP), 72-105 (SYIL…NPFL), and 120-153 (GEQA…TPGN).

Belongs to the Ycf3 family.

It is found in the plastid. The protein resides in the chloroplast thylakoid membrane. Essential for the assembly of the photosystem I (PSI) complex. May act as a chaperone-like factor to guide the assembly of the PSI subunits. This Ipomoea purpurea (Common morning glory) protein is Photosystem I assembly protein Ycf3.